A 176-amino-acid chain; its full sequence is Large ribosomal subunit protein uL6 (176 aa).

The protein belongs to the universal ribosomal protein uL6 family. In terms of assembly, part of the 50S ribosomal subunit.

This protein binds to the 23S rRNA, and is important in its secondary structure. It is located near the subunit interface in the base of the L7/L12 stalk, and near the tRNA binding site of the peptidyltransferase center. The chain is Large ribosomal subunit protein uL6 from Paraburkholderia xenovorans (strain LB400).